The sequence spans 428 residues: Serine--tRNA ligase (428 aa).

An L-serine-binding site is contributed by 236-238; it reads TAE. 267–269 lines the ATP pocket; sequence RSE. An L-serine-binding site is contributed by E290. Residue 354–357 coordinates ATP; that stretch reads EISS. S388 lines the L-serine pocket.

The protein belongs to the class-II aminoacyl-tRNA synthetase family. Type-1 seryl-tRNA synthetase subfamily. Homodimer. The tRNA molecule binds across the dimer.

The protein localises to the cytoplasm. The enzyme catalyses tRNA(Ser) + L-serine + ATP = L-seryl-tRNA(Ser) + AMP + diphosphate + H(+). The catalysed reaction is tRNA(Sec) + L-serine + ATP = L-seryl-tRNA(Sec) + AMP + diphosphate + H(+). Its pathway is aminoacyl-tRNA biosynthesis; selenocysteinyl-tRNA(Sec) biosynthesis; L-seryl-tRNA(Sec) from L-serine and tRNA(Sec): step 1/1. Functionally, catalyzes the attachment of serine to tRNA(Ser). Is also able to aminoacylate tRNA(Sec) with serine, to form the misacylated tRNA L-seryl-tRNA(Sec), which will be further converted into selenocysteinyl-tRNA(Sec). The chain is Serine--tRNA ligase from Psychrobacter sp. (strain PRwf-1).